The chain runs to 557 residues: Polypyrimidine tract-binding protein 1 (557 aa).

Methionine 1 carries the N-acetylmethionine modification. A Phosphoserine modification is found at serine 16. 3 consecutive RRM domains span residues 59-143 (RVIH…SSPN), 184-260 (LRII…FSKL), and 363-437 (SVLL…LSKH). A Glycyl lysine isopeptide (Lys-Gly) (interchain with G-Cter in SUMO2) cross-link involves residue lysine 65. Residue tyrosine 127 is modified to Phosphotyrosine. A Phosphothreonine modification is found at threonine 138. Residue serine 141 is modified to Phosphoserine. Lysine 218 participates in a covalent cross-link: Glycyl lysine isopeptide (Lys-Gly) (interchain with G-Cter in SUMO2). The disordered stretch occupies residues 437 to 460 (HQSVQLPREGQEDQGLTKDYGNSP). Serine 459 carries the post-translational modification Phosphoserine. An RRM 4 domain is found at 480–555 (ATLHLSNIPP…HHLRVSFSKS (76 aa)).

Monomer. Part of a ternary complex containing KHSRP, PTBP1, PTBP2 and HNRPH1. Interacts with RAVER1 and SFPQ.

The protein localises to the nucleus. In terms of biological role, plays a role in pre-mRNA splicing and in the regulation of alternative splicing events. Activates exon skipping of its own pre-mRNA during muscle cell differentiation. Binds to the polypyrimidine tract of introns. May promote RNA looping when bound to two separate polypyrimidine tracts in the same pre-mRNA. May promote the binding of U2 snRNP to pre-mRNA. Cooperates with RAVER1 to modulate switching between mutually exclusive exons during maturation of the TPM1 pre-mRNA. Represses the splicing of MAPT/Tau exon 10. Binds to polypyrimidine-rich controlling element (PCE) of CFTR and promotes exon skipping of CFTR exon 9, thereby antagonizing TIA1 and its role in exon inclusion of CFTR exon 9. Plays a role in the splicing of pyruvate kinase PKM by binding repressively to a polypyrimidine tract flanking PKM exon 9, inhibiting exon 9 inclusion and resulting in exon 10 inclusion and production of the PKM M2 isoform. The protein is Polypyrimidine tract-binding protein 1 (PTBP1) of Bos taurus (Bovine).